A 415-amino-acid polypeptide reads, in one-letter code: DNA polymerase IV 2 (415 aa).

The UmuC domain occupies 7–183 (ILHADLDAFY…LPVSLMWGVG (177 aa)). Residues D11 and D101 each contribute to the Mg(2+) site. The active site involves E102.

It belongs to the DNA polymerase type-Y family. As to quaternary structure, monomer. Mg(2+) is required as a cofactor.

The protein localises to the cytoplasm. The enzyme catalyses DNA(n) + a 2'-deoxyribonucleoside 5'-triphosphate = DNA(n+1) + diphosphate. Its function is as follows. Poorly processive, error-prone DNA polymerase involved in untargeted mutagenesis. Copies undamaged DNA at stalled replication forks, which arise in vivo from mismatched or misaligned primer ends. These misaligned primers can be extended by PolIV. Exhibits no 3'-5' exonuclease (proofreading) activity. May be involved in translesional synthesis, in conjunction with the beta clamp from PolIII. This chain is DNA polymerase IV 2 (dinB2), found in Mesorhizobium japonicum (strain LMG 29417 / CECT 9101 / MAFF 303099) (Mesorhizobium loti (strain MAFF 303099)).